Reading from the N-terminus, the 882-residue chain is Translation initiation factor IF-2 (882 aa).

The interval 28 to 296 is disordered; it reads GIRKSADDSV…LQQGFQKPAQ (269 aa). The segment covering 67–81 has biased composition (polar residues); that stretch reads STLNIPGTGGKSKSV. A compositionally biased stretch (basic and acidic residues) spans 92–209; it reads VKRDPQEAER…RMAEENKWTD (118 aa). Over residues 244-258 the composition is skewed to basic residues; sequence GRGRNAKAARPKKGN. The span at 259–272 shows a compositional bias: basic and acidic residues; it reads KHAESKADREEARA. The region spanning 381-550 is the tr-type G domain; it reads PRAPVVTIMG…LLQAEVLELK (170 aa). The segment at 390 to 397 is G1; that stretch reads GHVDHGKT. GTP is bound at residue 390 to 397; it reads GHVDHGKT. The G2 stretch occupies residues 415 to 419; the sequence is GITQH. A G3 region spans residues 436-439; the sequence is DTPG. GTP contacts are provided by residues 436–440 and 490–493; these read DTPGH and NKID. Residues 490–493 form a G4 region; the sequence is NKID. A G5 region spans residues 526–528; it reads SAK. Lys-800 bears the N6-acetyllysine mark.

The protein belongs to the TRAFAC class translation factor GTPase superfamily. Classic translation factor GTPase family. IF-2 subfamily.

The protein localises to the cytoplasm. In terms of biological role, one of the essential components for the initiation of protein synthesis. Protects formylmethionyl-tRNA from spontaneous hydrolysis and promotes its binding to the 30S ribosomal subunits. Also involved in the hydrolysis of GTP during the formation of the 70S ribosomal complex. The sequence is that of Translation initiation factor IF-2 from Shigella boydii serotype 4 (strain Sb227).